A 115-amino-acid polypeptide reads, in one-letter code: Non-specific lipid-transfer protein Cor a 8.0101 (115 aa).

The signal sequence occupies residues 1-23 (MGSLKLVCAVLLCMMVAAPVARA). Disulfide bonds link Cys-27–Cys-74, Cys-37–Cys-51, Cys-52–Cys-97, and Cys-72–Cys-111.

The protein belongs to the plant LTP family. Monomer. Expressed in seed (at protein level). Expressed in seed.

Plant non-specific lipid-transfer proteins transfer phospholipids as well as galactolipids across membranes. May play a role in wax or cutin deposition in the cell walls of expanding epidermal cells and certain secretory tissues. This is Non-specific lipid-transfer protein Cor a 8.0101 from Corylus avellana (European hazel).